A 468-amino-acid polypeptide reads, in one-letter code: Zinc finger protein 672 (468 aa).

C2H2-type zinc fingers lie at residues 15 to 37 (YSCS…ERAH), 43 to 65 (FCCL…RWTH), 71 to 93 (YICS…LGTH), and 100 to 123 (RPCR…ARQH). A C2H2-type 5; degenerate zinc finger spans residues 129 to 151 (HRCPLCARSFRQSALPFHLARAH). 9 consecutive C2H2-type zinc fingers follow at residues 167–189 (YHCT…SRIH), 202–224 (HLCG…LQRH), 230–252 (FKCP…QRTH), 258–280 (YACS…QRSH), 286–308 (HVCA…QRSH), 314–336 (FPCP…LRTH), 342–364 (YHCE…LRNH), 370–392 (HKCP…RKTH), and 398–420 (AECT…QRSH).

Belongs to the krueppel C2H2-type zinc-finger protein family.

It is found in the nucleus. In terms of biological role, may be involved in transcriptional regulation. The protein is Zinc finger protein 672 (Znf672) of Mus musculus (Mouse).